Here is a 396-residue protein sequence, read N- to C-terminus: Phosphoglycerate kinase (396 aa).

Residues 21–23 (DFN), Arg37, 60–63 (HLGR), Arg121, and Arg154 contribute to the substrate site. Residues Lys205, Gly296, Glu327, and 353–356 (GGDS) contribute to the ATP site.

It belongs to the phosphoglycerate kinase family. As to quaternary structure, monomer.

Its subcellular location is the cytoplasm. It carries out the reaction (2R)-3-phosphoglycerate + ATP = (2R)-3-phospho-glyceroyl phosphate + ADP. It participates in carbohydrate degradation; glycolysis; pyruvate from D-glyceraldehyde 3-phosphate: step 2/5. The chain is Phosphoglycerate kinase from Anaeromyxobacter dehalogenans (strain 2CP-C).